A 264-amino-acid polypeptide reads, in one-letter code: 3-methyl-2-oxobutanoate hydroxymethyltransferase 1 (264 aa).

The Mg(2+) site is built by Asp-45 and Asp-84. 3-methyl-2-oxobutanoate-binding positions include 45–46, Asp-84, and Lys-112; that span reads DS. Residue Glu-114 coordinates Mg(2+). Residue Glu-181 is the Proton acceptor of the active site.

Belongs to the PanB family. Homodecamer; pentamer of dimers. Mg(2+) serves as cofactor.

It is found in the cytoplasm. The catalysed reaction is 3-methyl-2-oxobutanoate + (6R)-5,10-methylene-5,6,7,8-tetrahydrofolate + H2O = 2-dehydropantoate + (6S)-5,6,7,8-tetrahydrofolate. It functions in the pathway cofactor biosynthesis; (R)-pantothenate biosynthesis; (R)-pantoate from 3-methyl-2-oxobutanoate: step 1/2. Functionally, catalyzes the reversible reaction in which hydroxymethyl group from 5,10-methylenetetrahydrofolate is transferred onto alpha-ketoisovalerate to form ketopantoate. The sequence is that of 3-methyl-2-oxobutanoate hydroxymethyltransferase 1 from Aliivibrio fischeri (strain ATCC 700601 / ES114) (Vibrio fischeri).